We begin with the raw amino-acid sequence, 154 residues long: 6,7-dimethyl-8-ribityllumazine synthase (154 aa).

5-amino-6-(D-ribitylamino)uracil is bound by residues Phe22, 56–58, and 80–82; these read AFE and AVI. 85–86 provides a ligand contact to (2S)-2-hydroxy-3-oxobutyl phosphate; that stretch reads ET. Residue His88 is the Proton donor of the active site. Residue Phe113 participates in 5-amino-6-(D-ribitylamino)uracil binding. Residue Arg127 coordinates (2S)-2-hydroxy-3-oxobutyl phosphate.

It belongs to the DMRL synthase family.

It catalyses the reaction (2S)-2-hydroxy-3-oxobutyl phosphate + 5-amino-6-(D-ribitylamino)uracil = 6,7-dimethyl-8-(1-D-ribityl)lumazine + phosphate + 2 H2O + H(+). The protein operates within cofactor biosynthesis; riboflavin biosynthesis; riboflavin from 2-hydroxy-3-oxobutyl phosphate and 5-amino-6-(D-ribitylamino)uracil: step 1/2. Functionally, catalyzes the formation of 6,7-dimethyl-8-ribityllumazine by condensation of 5-amino-6-(D-ribitylamino)uracil with 3,4-dihydroxy-2-butanone 4-phosphate. This is the penultimate step in the biosynthesis of riboflavin. This chain is 6,7-dimethyl-8-ribityllumazine synthase, found in Thermoanaerobacter sp. (strain X514).